Consider the following 309-residue polypeptide: Elongation factor Ts (309 aa).

Residues 82 to 85 (TDFV) are involved in Mg(2+) ion dislocation from EF-Tu.

The protein belongs to the EF-Ts family.

The protein localises to the cytoplasm. Associates with the EF-Tu.GDP complex and induces the exchange of GDP to GTP. It remains bound to the aminoacyl-tRNA.EF-Tu.GTP complex up to the GTP hydrolysis stage on the ribosome. This chain is Elongation factor Ts, found in Rickettsia massiliae (strain Mtu5).